Reading from the N-terminus, the 1052-residue chain is Kruppel-like factor 18 (1052 aa).

3 C2H2-type zinc fingers span residues 964–988 (YVCTYEDCKMSYSKACHLRTHMRKH), 994–1018 (YVCDVEGCTWKFARSDELNRHKKRH), and 1024–1046 (YLCSICSKNFARSDHLKQHAKVH).

This sequence belongs to the krueppel C2H2-type zinc-finger protein family.

The protein localises to the nucleus. The sequence is that of Kruppel-like factor 18 from Homo sapiens (Human).